We begin with the raw amino-acid sequence, 420 residues long: 3-phosphoshikimate 1-carboxyvinyltransferase (420 aa).

3 residues coordinate 3-phosphoshikimate: Lys-26, Ser-27, and Arg-31. Phosphoenolpyruvate is bound at residue Lys-26. Gly-97 and Arg-125 together coordinate phosphoenolpyruvate. Ser-170, Ser-171, Gln-172, Asp-297, Asn-320, and Lys-324 together coordinate 3-phosphoshikimate. A phosphoenolpyruvate-binding site is contributed by Gln-172. Residue Asp-297 is the Proton acceptor of the active site. The phosphoenolpyruvate site is built by Arg-328, Arg-375, and Lys-400.

Belongs to the EPSP synthase family. As to quaternary structure, monomer.

It localises to the cytoplasm. It carries out the reaction 3-phosphoshikimate + phosphoenolpyruvate = 5-O-(1-carboxyvinyl)-3-phosphoshikimate + phosphate. Its pathway is metabolic intermediate biosynthesis; chorismate biosynthesis; chorismate from D-erythrose 4-phosphate and phosphoenolpyruvate: step 6/7. In terms of biological role, catalyzes the transfer of the enolpyruvyl moiety of phosphoenolpyruvate (PEP) to the 5-hydroxyl of shikimate-3-phosphate (S3P) to produce enolpyruvyl shikimate-3-phosphate and inorganic phosphate. In Rhizobium etli (strain ATCC 51251 / DSM 11541 / JCM 21823 / NBRC 15573 / CFN 42), this protein is 3-phosphoshikimate 1-carboxyvinyltransferase.